We begin with the raw amino-acid sequence, 240 residues long: Ubiquinone biosynthesis O-methyltransferase (240 aa).

The S-adenosyl-L-methionine site is built by Arg-44, Gly-64, Asp-85, and Met-129.

The protein belongs to the methyltransferase superfamily. UbiG/COQ3 family.

The catalysed reaction is a 3-demethylubiquinol + S-adenosyl-L-methionine = a ubiquinol + S-adenosyl-L-homocysteine + H(+). It catalyses the reaction a 3-(all-trans-polyprenyl)benzene-1,2-diol + S-adenosyl-L-methionine = a 2-methoxy-6-(all-trans-polyprenyl)phenol + S-adenosyl-L-homocysteine + H(+). Its pathway is cofactor biosynthesis; ubiquinone biosynthesis. In terms of biological role, O-methyltransferase that catalyzes the 2 O-methylation steps in the ubiquinone biosynthetic pathway. This Escherichia coli (strain K12 / MC4100 / BW2952) protein is Ubiquinone biosynthesis O-methyltransferase.